Reading from the N-terminus, the 999-residue chain is Desmoglein-3 (999 aa).

A signal peptide spans M1–G23. Positions E24–R49 are excised as a propeptide. Cadherin domains lie at E50 to S158, Q159 to R268, D269 to F383, and A386 to K499. At E50–R615 the chain is on the extracellular side. N110 and N180 each carry an N-linked (GlcNAc...) asparagine glycan. Residues N459 and N545 are each glycosylated (N-linked (GlcNAc...) asparagine). The chain crosses the membrane as a helical span at residues L616–T640. The Cytoplasmic segment spans residues C641–I999. Residues D642–E714 are required for interaction with CTNND1 and localization at cell-cell junctions. Desmoglein repeat repeat units follow at residues L910 to E935 and T936 to I966.

Homodimer. Part of a complex that contains DSG3, PKP1, YAP1 and YWHAG; the complex is required for localization of DSG3 and YAP1 to the cell membrane in keratinocytes. Interacts with PKP2. Interacts with CTNND1; the interaction facilitates DSG3 localization and retention at cell-cell junctions. Interacts with CDH1; the interaction is required for CDH1 localization to developing adherens junctions. Interacts with RAC1; the interaction is required for DSG3 translocation to cell-cell junctions, organization of cortical F-actin bundles and actin anchoring at cell-cell junctions. Interacts with DSC3; the interaction may limit the interaction of DSC3 with p38MAPK family members and therefore repress p38MAPK signaling activation. In terms of tissue distribution, expressed throughout the basal and spinous layer of the epidermis with weak expression in the granular layer (at protein level). Expressed in skin and mucosa (at protein level). Expressed in the basal layer of the outer root sheath of the telogen hair club, specifically at the cell membrane between the apex of the cells and the surrounding hair club (at protein level). Expression is less abundant between the lateral margins of the outer root sheath basal cells (at protein level). Also expressed in the tongue, tonsil and esophagus.

The protein resides in the cell membrane. It is found in the cell junction. It localises to the desmosome. The protein localises to the cytoplasm. Its subcellular location is the tight junction. In terms of biological role, a component of desmosome cell-cell junctions which are required for positive regulation of cellular adhesion. Required for adherens and desmosome junction assembly in response to mechanical force in keratinocytes. Required for desmosome-mediated cell-cell adhesion of cells surrounding the telogen hair club and the basal layer of the outer root sheath epithelium, consequently is essential for the anchoring of telogen hairs in the hair follicle. Required for the maintenance of the epithelial barrier via promoting desmosome-mediated intercellular attachment of suprabasal epithelium to basal cells. May play a role in the protein stability of the desmosome plaque components DSP, JUP, PKP1, PKP2 and PKP3. Required for YAP1 localization at the plasma membrane in keratinocytes in response to mechanical strain, via the formation of an interaction complex composed of DSG3, PKP1 and YWHAG. May also be involved in the positive regulation of YAP1 target gene transcription and as a result cell proliferation. Positively regulates cellular contractility and cell junction formation via organization of cortical F-actin bundles and anchoring of actin to tight junctions, in conjunction with RAC1. The cytoplasmic pool of DSG3 is required for the localization of CDH1 and CTNNB1 at developing adherens junctions, potentially via modulation of SRC activity. Inhibits keratinocyte migration via suppression of p38MAPK signaling, may therefore play a role in moderating wound healing. This is Desmoglein-3 from Homo sapiens (Human).